Reading from the N-terminus, the 312-residue chain is Telomere-binding protein OPG077 (312 aa).

The protein belongs to the orthopoxvirus OPG077 family.

It localises to the virion. Its function is as follows. DNA-binding protein which binds to the hairpin form of the viral telomeric sequence. Required for the production of mature virions (MV). This Vaccinia virus (strain L-IVP) (VACV) protein is Telomere-binding protein OPG077 (OPG077).